The following is a 176-amino-acid chain: NAD(P)H-quinone oxidoreductase subunit J (176 aa).

Belongs to the complex I 30 kDa subunit family. In terms of assembly, NDH-1 can be composed of about 15 different subunits; different subcomplexes with different compositions have been identified which probably have different functions.

Its subcellular location is the cell inner membrane. It carries out the reaction a plastoquinone + NADH + (n+1) H(+)(in) = a plastoquinol + NAD(+) + n H(+)(out). It catalyses the reaction a plastoquinone + NADPH + (n+1) H(+)(in) = a plastoquinol + NADP(+) + n H(+)(out). Functionally, NDH-1 shuttles electrons from an unknown electron donor, via FMN and iron-sulfur (Fe-S) centers, to quinones in the respiratory and/or the photosynthetic chain. The immediate electron acceptor for the enzyme in this species is believed to be plastoquinone. Couples the redox reaction to proton translocation, and thus conserves the redox energy in a proton gradient. Cyanobacterial NDH-1 also plays a role in inorganic carbon-concentration. This Gloeobacter violaceus (strain ATCC 29082 / PCC 7421) protein is NAD(P)H-quinone oxidoreductase subunit J.